We begin with the raw amino-acid sequence, 96 residues long: Large ribosomal subunit protein uL23 (96 aa).

Belongs to the universal ribosomal protein uL23 family. Part of the 50S ribosomal subunit. Contacts protein L29, and trigger factor when it is bound to the ribosome.

Its function is as follows. One of the early assembly proteins it binds 23S rRNA. One of the proteins that surrounds the polypeptide exit tunnel on the outside of the ribosome. Forms the main docking site for trigger factor binding to the ribosome. The polypeptide is Large ribosomal subunit protein uL23 (Alkaliphilus metalliredigens (strain QYMF)).